A 101-amino-acid polypeptide reads, in one-letter code: ATP synthase subunit c (101 aa).

A run of 2 helical transmembrane segments spans residues 31–51 and 81–101; these read AFAYLGAGLAMIGVIGVGAGQ and AISETSSIYALLVALILIFVG.

Belongs to the ATPase C chain family. As to quaternary structure, F-type ATPases have 2 components, F(1) - the catalytic core - and F(0) - the membrane proton channel. F(1) has five subunits: alpha(3), beta(3), gamma(1), delta(1), epsilon(1). F(0) has three main subunits: a(1), b(2) and c(10-14). The alpha and beta chains form an alternating ring which encloses part of the gamma chain. F(1) is attached to F(0) by a central stalk formed by the gamma and epsilon chains, while a peripheral stalk is formed by the delta and b chains.

Its subcellular location is the cell membrane. In terms of biological role, f(1)F(0) ATP synthase produces ATP from ADP in the presence of a proton or sodium gradient. F-type ATPases consist of two structural domains, F(1) containing the extramembraneous catalytic core and F(0) containing the membrane proton channel, linked together by a central stalk and a peripheral stalk. During catalysis, ATP synthesis in the catalytic domain of F(1) is coupled via a rotary mechanism of the central stalk subunits to proton translocation. Functionally, key component of the F(0) channel; it plays a direct role in translocation across the membrane. A homomeric c-ring of between 10-14 subunits forms the central stalk rotor element with the F(1) delta and epsilon subunits. The chain is ATP synthase subunit c from Mesomycoplasma hyopneumoniae (strain 7448) (Mycoplasma hyopneumoniae).